Reading from the N-terminus, the 279-residue chain is Thymidylate synthase (279 aa).

DUMP is bound at residue 133-134 (RR). Catalysis depends on C154, which acts as the Nucleophile. DUMP-binding positions include 178 to 181 (RSND), N189, and 219 to 221 (HIY). D181 is a binding site for (6R)-5,10-methylene-5,6,7,8-tetrahydrofolate. A278 contacts (6R)-5,10-methylene-5,6,7,8-tetrahydrofolate.

The protein belongs to the thymidylate synthase family. Bacterial-type ThyA subfamily. As to quaternary structure, homodimer.

It is found in the cytoplasm. The enzyme catalyses dUMP + (6R)-5,10-methylene-5,6,7,8-tetrahydrofolate = 7,8-dihydrofolate + dTMP. Its pathway is pyrimidine metabolism; dTTP biosynthesis. Its function is as follows. Catalyzes the reductive methylation of 2'-deoxyuridine-5'-monophosphate (dUMP) to 2'-deoxythymidine-5'-monophosphate (dTMP) while utilizing 5,10-methylenetetrahydrofolate (mTHF) as the methyl donor and reductant in the reaction, yielding dihydrofolate (DHF) as a by-product. This enzymatic reaction provides an intracellular de novo source of dTMP, an essential precursor for DNA biosynthesis. The protein is Thymidylate synthase of Streptococcus pneumoniae (strain ATCC 700669 / Spain 23F-1).